We begin with the raw amino-acid sequence, 94 residues long: Co-chaperonin GroES (94 aa).

Belongs to the GroES chaperonin family. Heptamer of 7 subunits arranged in a ring. Interacts with the chaperonin GroEL.

Its subcellular location is the cytoplasm. Together with the chaperonin GroEL, plays an essential role in assisting protein folding. The GroEL-GroES system forms a nano-cage that allows encapsulation of the non-native substrate proteins and provides a physical environment optimized to promote and accelerate protein folding. GroES binds to the apical surface of the GroEL ring, thereby capping the opening of the GroEL channel. The protein is Co-chaperonin GroES of Streptococcus pneumoniae (strain 70585).